The sequence spans 496 residues: Cytochrome P450 71D95 (496 aa).

The chain crosses the membrane as a helical; Signal-anchor span at residues 2–22 (ELQISSAIIILVATFVASLLI). Residue Cys436 participates in heme binding.

The protein belongs to the cytochrome P450 family. Requires heme as cofactor.

It is found in the endoplasmic reticulum membrane. The enzyme catalyses (4S)-limonene + reduced [NADPH--hemoprotein reductase] + O2 = (1S,6R)-isopiperitenol + oxidized [NADPH--hemoprotein reductase] + H2O + H(+). In terms of biological role, hydroxylates both (+)- and (-)-limonene to (+) and (-)-trans-isopiperitenol. In Mentha spicata (Spearmint), this protein is Cytochrome P450 71D95 (CYP71D95).